The sequence spans 71 residues: uncharacterized protein (71 aa).

This is an uncharacterized protein from Enterobacteria phage T4 (Bacteriophage T4).